Here is a 385-residue protein sequence, read N- to C-terminus: Lipid-A-disaccharide synthase 2 (385 aa).

Belongs to the LpxB family.

It carries out the reaction a lipid X + a UDP-2-N,3-O-bis[(3R)-3-hydroxyacyl]-alpha-D-glucosamine = a lipid A disaccharide + UDP + H(+). The protein operates within bacterial outer membrane biogenesis; LPS lipid A biosynthesis. Its function is as follows. Condensation of UDP-2,3-diacylglucosamine and 2,3-diacylglucosamine-1-phosphate to form lipid A disaccharide, a precursor of lipid A, a phosphorylated glycolipid that anchors the lipopolysaccharide to the outer membrane of the cell. This chain is Lipid-A-disaccharide synthase 2, found in Legionella pneumophila subsp. pneumophila (strain Philadelphia 1 / ATCC 33152 / DSM 7513).